We begin with the raw amino-acid sequence, 232 residues long: 2-C-methyl-D-erythritol 4-phosphate cytidylyltransferase (232 aa).

The protein belongs to the IspD/TarI cytidylyltransferase family. IspD subfamily.

It carries out the reaction 2-C-methyl-D-erythritol 4-phosphate + CTP + H(+) = 4-CDP-2-C-methyl-D-erythritol + diphosphate. It functions in the pathway isoprenoid biosynthesis; isopentenyl diphosphate biosynthesis via DXP pathway; isopentenyl diphosphate from 1-deoxy-D-xylulose 5-phosphate: step 2/6. In terms of biological role, catalyzes the formation of 4-diphosphocytidyl-2-C-methyl-D-erythritol from CTP and 2-C-methyl-D-erythritol 4-phosphate (MEP). This is 2-C-methyl-D-erythritol 4-phosphate cytidylyltransferase from Geobacter metallireducens (strain ATCC 53774 / DSM 7210 / GS-15).